Here is a 181-residue protein sequence, read N- to C-terminus: NAD(P)H-quinone oxidoreductase subunit I, chloroplastic (181 aa).

4Fe-4S ferredoxin-type domains lie at 52 to 81 and 92 to 121; these read GRIH…VDWE and KSYS…MTEE. The [4Fe-4S] cluster site is built by Cys61, Cys64, Cys67, Cys71, Cys101, Cys104, Cys107, and Cys111.

It belongs to the complex I 23 kDa subunit family. NDH is composed of at least 16 different subunits, 5 of which are encoded in the nucleus. [4Fe-4S] cluster serves as cofactor.

The protein localises to the plastid. Its subcellular location is the chloroplast thylakoid membrane. The catalysed reaction is a plastoquinone + NADH + (n+1) H(+)(in) = a plastoquinol + NAD(+) + n H(+)(out). The enzyme catalyses a plastoquinone + NADPH + (n+1) H(+)(in) = a plastoquinol + NADP(+) + n H(+)(out). NDH shuttles electrons from NAD(P)H:plastoquinone, via FMN and iron-sulfur (Fe-S) centers, to quinones in the photosynthetic chain and possibly in a chloroplast respiratory chain. The immediate electron acceptor for the enzyme in this species is believed to be plastoquinone. Couples the redox reaction to proton translocation, and thus conserves the redox energy in a proton gradient. This is NAD(P)H-quinone oxidoreductase subunit I, chloroplastic from Zygnema circumcarinatum (Green alga).